Reading from the N-terminus, the 196-residue chain is Endonuclease V (196 aa).

Asp-37 and Asp-98 together coordinate Mg(2+).

The protein belongs to the endonuclease V family. It depends on Mg(2+) as a cofactor.

Its subcellular location is the cytoplasm. It catalyses the reaction Endonucleolytic cleavage at apurinic or apyrimidinic sites to products with a 5'-phosphate.. DNA repair enzyme involved in the repair of deaminated bases. Selectively cleaves double-stranded DNA at the second phosphodiester bond 3' to a deoxyinosine leaving behind the intact lesion on the nicked DNA. The chain is Endonuclease V from Sulfurisphaera tokodaii (strain DSM 16993 / JCM 10545 / NBRC 100140 / 7) (Sulfolobus tokodaii).